The sequence spans 712 residues: Aryl hydrocarbon receptor nuclear translocator 2 (712 aa).

The segment at 36 to 73 (AGAMPARGGKRRSGMDFDDEDGEGPSKFSRENHSEIER) is disordered. The residue at position 42 (R42) is an Omega-N-methylarginine. The segment covering 63–73 (FSRENHSEIER) has biased composition (basic and acidic residues). A bHLH domain is found at 63-116 (FSRENHSEIERRRRNKMTQYITELSDMVPTCSALARKPDKLTILRMAVSHMKSM). PAS domains follow at residues 134 to 209 (TEQE…MTGR) and 323 to 393 (PVCM…VKLK). Residues 398–441 (SVMYRFRTKNREWLLIRTSSFTFQNPYSDEIEYVICTNTNVKQL) enclose the PAC domain. The tract at residues 573 to 712 (AWTGSRPPFP…DLGMFPPFSE (140 aa)) is disordered. 2 stretches are compositionally biased toward low complexity: residues 597–626 (SSHPYPADPSSYSPLSSPAASSPSGNAYPS) and 653–675 (SQWQSQHHGQQSGEQHSHQQPGQ).

Efficient DNA binding requires dimerization with another bHLH protein. Heterodimer with NPAS4 or SIM1. Heterodimer with the aryl hydrocarbon receptor (AHR) or the SIM1 protein. Interacts with TACC3. In terms of tissue distribution, restricted to adult brain and kidney.

The protein resides in the nucleus. Its function is as follows. Transcription factor that plays a role in the development of the hypothalamo-pituitary axis, postnatal brain growth, and visual and renal function. Specifically recognizes the xenobiotic response element (XRE). This chain is Aryl hydrocarbon receptor nuclear translocator 2 (Arnt2), found in Mus musculus (Mouse).